The primary structure comprises 117 residues: Large ribosomal subunit protein uL18 (117 aa).

This sequence belongs to the universal ribosomal protein uL18 family. Part of the 50S ribosomal subunit; part of the 5S rRNA/L5/L18/L25 subcomplex. Contacts the 5S and 23S rRNAs.

In terms of biological role, this is one of the proteins that bind and probably mediate the attachment of the 5S RNA into the large ribosomal subunit, where it forms part of the central protuberance. The sequence is that of Large ribosomal subunit protein uL18 from Colwellia psychrerythraea (strain 34H / ATCC BAA-681) (Vibrio psychroerythus).